The following is a 418-amino-acid chain: Putative competence-damage inducible protein (418 aa).

The protein belongs to the CinA family.

The sequence is that of Putative competence-damage inducible protein from Streptococcus pneumoniae serotype 2 (strain D39 / NCTC 7466).